The following is a 316-amino-acid chain: MQILLANPRGFCAGVDRAISIVENALAIYGAPIYVRHEVVHNRYVVDSLRERGAIFIEQISEVPDGAILIFSAHGVSQAVRNEAKSRDLTVFDATCPLVTKVHMEVARSSRRGEEAILIGHAGHPEVEGTMGQYSNPEGGMYLVESPEDVWKITVKDENNLSFMTQTTLSVDDTSEVIDALRSRFPKIVGPRKDDICYATTNRQEAVRALAEQADVVLVVGSKNSSNSNRLAELAQRMGKTAYLIDDANDIQEAWVQNAACVGVTAGASAPDVLVQNVITRLKALGGSDAHELTGREENIVFEVPKELRIDAREVQ.

Residue Cys12 coordinates [4Fe-4S] cluster. Positions 41 and 74 each coordinate (2E)-4-hydroxy-3-methylbut-2-enyl diphosphate. 2 residues coordinate dimethylallyl diphosphate: His41 and His74. The isopentenyl diphosphate site is built by His41 and His74. Residue Cys96 coordinates [4Fe-4S] cluster. His124 provides a ligand contact to (2E)-4-hydroxy-3-methylbut-2-enyl diphosphate. His124 provides a ligand contact to dimethylallyl diphosphate. An isopentenyl diphosphate-binding site is contributed by His124. Residue Glu126 is the Proton donor of the active site. Thr167 is a binding site for (2E)-4-hydroxy-3-methylbut-2-enyl diphosphate. Position 197 (Cys197) interacts with [4Fe-4S] cluster. (2E)-4-hydroxy-3-methylbut-2-enyl diphosphate is bound by residues Ser225, Ser226, Asn227, and Ser269. Positions 225, 226, 227, and 269 each coordinate dimethylallyl diphosphate. The isopentenyl diphosphate site is built by Ser225, Ser226, Asn227, and Ser269.

Belongs to the IspH family. Homodimer. It depends on [4Fe-4S] cluster as a cofactor.

The catalysed reaction is isopentenyl diphosphate + 2 oxidized [2Fe-2S]-[ferredoxin] + H2O = (2E)-4-hydroxy-3-methylbut-2-enyl diphosphate + 2 reduced [2Fe-2S]-[ferredoxin] + 2 H(+). It catalyses the reaction dimethylallyl diphosphate + 2 oxidized [2Fe-2S]-[ferredoxin] + H2O = (2E)-4-hydroxy-3-methylbut-2-enyl diphosphate + 2 reduced [2Fe-2S]-[ferredoxin] + 2 H(+). Its pathway is isoprenoid biosynthesis; dimethylallyl diphosphate biosynthesis; dimethylallyl diphosphate from (2E)-4-hydroxy-3-methylbutenyl diphosphate: step 1/1. The protein operates within isoprenoid biosynthesis; isopentenyl diphosphate biosynthesis via DXP pathway; isopentenyl diphosphate from 1-deoxy-D-xylulose 5-phosphate: step 6/6. In terms of biological role, catalyzes the conversion of 1-hydroxy-2-methyl-2-(E)-butenyl 4-diphosphate (HMBPP) into a mixture of isopentenyl diphosphate (IPP) and dimethylallyl diphosphate (DMAPP). Acts in the terminal step of the DOXP/MEP pathway for isoprenoid precursor biosynthesis. This Cronobacter sakazakii (strain ATCC BAA-894) (Enterobacter sakazakii) protein is 4-hydroxy-3-methylbut-2-enyl diphosphate reductase.